The following is a 612-amino-acid chain: Bifunctional lycopene cyclase/phytoene synthase (612 aa).

The lycopene beta-cyclase stretch occupies residues 1–268 (MGWEYAQVHL…IVFGLIACDN (268 aa)). A run of 7 helical transmembrane segments spans residues 3–23 (WEYAQVHLKYTIPFGVVLAAV), 31–51 (LDVFKLVFLITVSFFWVVKGL), 112–130 (LFFFVIQTFNTSLLYMILS), 148–168 (IAGQILFASAIIFGLVSVSSG), 171–191 (GMYMGLILIWACPFLLFLWSI), 203–223 (NTALPIALPTLYLWVVDTFAL), and 246–266 (IEEAVFFLLTNTLIVFGLIAC). A phytoene synthase region spans residues 275 to 612 (TFPEHFPRTK…IRVAWSALNK (338 aa)).

In the N-terminal section; belongs to the lycopene beta-cyclase family. It in the C-terminal section; belongs to the phytoene/squalene synthase family.

Its subcellular location is the membrane. The enzyme catalyses all-trans-lycopene = gamma-carotene. It carries out the reaction gamma-carotene = all-trans-beta-carotene. The catalysed reaction is 2 (2E,6E,10E)-geranylgeranyl diphosphate = 15-cis-phytoene + 2 diphosphate. Its pathway is carotenoid biosynthesis; beta-carotene biosynthesis. It participates in carotenoid biosynthesis; phytoene biosynthesis; all-trans-phytoene from geranylgeranyl diphosphate: step 1/1. Functionally, bifunctional enzyme; part of the car gene cluster that mediates the biosynthesis of neurosporaxanthin, a carboxylic apocarotenoid acting as an essential protective pigments and leading to orange pigmentation. CarAR catalyzes the first step of the pathway by converting geranylgeranyl diphosphate to phytoene, as well as the later cyclization step that transforms the carB product lycopene into gamma-carotene. CarAR also converts part of gamma-carotene into beta-carotene. Neurosporaxanthin is synthesized from geranyl-geranyl pyrophosphate (GGPP) through several enzymatic activities. Phytoene synthase activity performed by the bifunctional enzyme carAR first produces phytoene from geranyl-geranyl pyrophosphate (GGPP). The phytoene dehydrogenase carB then introduces 4 desaturations to lead to lycopene which is substrate of the carotene cyclase activity of carAR that leads to the production of gamma-carotene. CarB then performs a 5th desaturation reaction to yield torulene. Torulene is the substrate of the dioxidase carT that breaks the molecule, removing five carbon atoms to yield beta-apo-4'-carotenal, whereas the aldehyde dehydrogenase carD mediates the last step by converting beta-apo-4'-carotenal into neurosporaxanthin. The chain is Bifunctional lycopene cyclase/phytoene synthase from Fusarium fujikuroi (Bakanae and foot rot disease fungus).